A 181-amino-acid chain; its full sequence is uncharacterized protein (181 aa).

A run of 2 helical transmembrane segments spans residues 24-46 (IAAVLISTSFVLFGFLALVLLNV) and 55-77 (GIVAIVSLIAIWVLMTAGVYILL).

Its subcellular location is the cell membrane. This is an uncharacterized protein from Archaeoglobus fulgidus (strain ATCC 49558 / DSM 4304 / JCM 9628 / NBRC 100126 / VC-16).